The chain runs to 843 residues: Taste receptor type 1 member 2 (843 aa).

The N-terminal stretch at 1 to 19 is a signal peptide; the sequence is MGPQARTLHLLFLLLHALP. The Extracellular segment spans residues 20-570; sequence KPVMLVGNSD…AFLEWHEVPT (551 aa). N-linked (GlcNAc...) asparagine glycosylation is found at Asn-87, Asn-296, Asn-316, Asn-355, Asn-372, Asn-432, Asn-484, Asn-491, and Asn-531. A helical transmembrane segment spans residues 571 to 591; that stretch reads IVVTILAALGFISTLAILLIF. At 592–606 the chain is on the cytoplasmic side; it reads WRHFQTPMVRSAGGP. A helical transmembrane segment spans residues 607–627; it reads MCFLMLVPLLLAFGMVPVYVG. Over 628 to 642 the chain is Extracellular; that stretch reads PPTVFSCFCRQAFFT. A helical membrane pass occupies residues 643–663; it reads VCFSVCLSCITVRSFQIVCVF. The Cytoplasmic portion of the chain corresponds to 664-682; sequence KMARRLPSAYGFWMRYHGP. Residues 683–703 form a helical membrane-spanning segment; it reads YVFVAFITAVKVALVAGNMLA. At 704 to 731 the chain is on the extracellular side; the sequence is TTINPIGRTDPDDPNIIILSCHPNYRNG. A helical transmembrane segment spans residues 732-752; the sequence is LLFNTSMDLLLSVLGFSFAYV. Residues 753–764 are Cytoplasmic-facing; sequence GKELPTNYNEAK. The chain crosses the membrane as a helical span at residues 765–785; sequence FITLSMTFSFTSSISLCTFMS. Over 786-789 the chain is Extracellular; it reads VHDG. Residues 790–810 traverse the membrane as a helical segment; the sequence is VLVTIMDLLVTVLNFLAIGLG. The Cytoplasmic portion of the chain corresponds to 811–843; sequence YFGPKCYMILFYPERNTSAYFNSMIQGYTMRKS.

Belongs to the G-protein coupled receptor 3 family. TAS1R subfamily. Forms heterodimers with TAS1R3. Expressed mainly in circumvallate and foliate taste papillae.

The protein resides in the cell membrane. Functionally, putative taste receptor. TAS1R2/TAS1R3 recognizes diverse natural and synthetic sweeteners. This chain is Taste receptor type 1 member 2 (Tas1r2), found in Mus musculus (Mouse).